The primary structure comprises 310 residues: Ribosomal RNA small subunit methyltransferase H (310 aa).

Residues 33 to 35 (AGH), D53, F79, D100, and Q107 contribute to the S-adenosyl-L-methionine site.

Belongs to the methyltransferase superfamily. RsmH family.

Its subcellular location is the cytoplasm. The catalysed reaction is cytidine(1402) in 16S rRNA + S-adenosyl-L-methionine = N(4)-methylcytidine(1402) in 16S rRNA + S-adenosyl-L-homocysteine + H(+). In terms of biological role, specifically methylates the N4 position of cytidine in position 1402 (C1402) of 16S rRNA. In Clostridium botulinum (strain Alaska E43 / Type E3), this protein is Ribosomal RNA small subunit methyltransferase H.